A 236-amino-acid polypeptide reads, in one-letter code: Pyridoxine 5'-phosphate synthase (236 aa).

Position 6 (Asn6) interacts with 3-amino-2-oxopropyl phosphate. 8–9 (DH) serves as a coordination point for 1-deoxy-D-xylulose 5-phosphate. Arg17 is a 3-amino-2-oxopropyl phosphate binding site. Residue His42 is the Proton acceptor of the active site. Residues Arg44 and His49 each contribute to the 1-deoxy-D-xylulose 5-phosphate site. Catalysis depends on Glu69, which acts as the Proton acceptor. Thr99 serves as a coordination point for 1-deoxy-D-xylulose 5-phosphate. Residue His190 is the Proton donor of the active site. 3-amino-2-oxopropyl phosphate is bound by residues Gly191 and 212-213 (GH).

Belongs to the PNP synthase family. As to quaternary structure, homooctamer; tetramer of dimers.

It localises to the cytoplasm. It carries out the reaction 3-amino-2-oxopropyl phosphate + 1-deoxy-D-xylulose 5-phosphate = pyridoxine 5'-phosphate + phosphate + 2 H2O + H(+). Its pathway is cofactor biosynthesis; pyridoxine 5'-phosphate biosynthesis; pyridoxine 5'-phosphate from D-erythrose 4-phosphate: step 5/5. Catalyzes the complicated ring closure reaction between the two acyclic compounds 1-deoxy-D-xylulose-5-phosphate (DXP) and 3-amino-2-oxopropyl phosphate (1-amino-acetone-3-phosphate or AAP) to form pyridoxine 5'-phosphate (PNP) and inorganic phosphate. The polypeptide is Pyridoxine 5'-phosphate synthase (Pelodictyon phaeoclathratiforme (strain DSM 5477 / BU-1)).